A 155-amino-acid polypeptide reads, in one-letter code: Endoribonuclease YbeY (155 aa).

Zn(2+) contacts are provided by His-114, His-118, and His-124.

Belongs to the endoribonuclease YbeY family. Requires Zn(2+) as cofactor.

The protein resides in the cytoplasm. Its function is as follows. Single strand-specific metallo-endoribonuclease involved in late-stage 70S ribosome quality control and in maturation of the 3' terminus of the 16S rRNA. The chain is Endoribonuclease YbeY from Tolumonas auensis (strain DSM 9187 / NBRC 110442 / TA 4).